Reading from the N-terminus, the 549-residue chain is Cell death protein 4 (549 aa).

One can recognise a CARD domain in the interval 1–91 (MLCEIECRAL…HLADFLEDYI (91 aa)). ATP-binding residues include tyrosine 131, glycine 162, glycine 164, lysine 165, serine 166, valine 167, arginine 273, threonine 367, and tyrosine 369. One can recognise an NB-ARC domain in the interval 133 to 417 (REYHVDRVIK…KLWSCVIPVD (285 aa)). Residue serine 166 coordinates Mg(2+).

In terms of assembly, associates as an asymmetric homodimer with ced-9. Only one ced-4 molecule within the dimer interacts directly with ced-9. Upon release from ced-9, forms a multimer, known as the apoptosome, and interacts with ced-3; the interaction results in ced-3 autoproteolytic cleavage and activation. Multiple oligomeric states of the apoptosome are observed including hexamers, heptamers and octamers. The hexamers likely represent a pre-mature state of the apoptosome and may contribute to the regulation of ced-3 activation. The apoptosome multimer also interacts with two processed ced-3 to form a stable holoenzyme. Interacts with sex-determining protein fem-1. May form a complex composed of ced-3, ced-4 and mac-1 or of ced-9, ced-4 and mac-1. Within the complex, interacts with mac-1.

Its subcellular location is the mitochondrion. The protein localises to the cytoplasm. It localises to the perinuclear region. Its function is as follows. Component of the egl-1, ced-9, ced-4 and ced-3 apoptotic signaling cascade required for the initiation of programmed cell death in cells fated to die during embryonic and postembryonic development. During oogenesis, required for germline apoptosis downstream of ced-9 and upstream of ced-3 but independently of egl-1. May regulate germline apoptosis in response to DNA damage, probably downstream of let-60/ras and mpk-1 pathway. Regulates CEP neuron apoptosis in response to high Al(3+) levels. During male tail morphogenesis, promotes apoptosis of the tail-spike cell upstream of ced-3 but independently of egl-1 and ced-9. May play a role in sex-specific cell apoptosis, probably by promoting ced-3-mediated cleavage of sex-determining protein fem-1. During larval development, required for the elimination of transient presynaptic components downstream of egl-1 and ced-9 and upstream of ced-3 apoptotic pathway. Downstream of calreticulin crt-1 and upstream of ced-3 and independently of egl-1 and ced-9, plays a role in the initial steps of axonal regrowth following axotomy. Together with ain-1, a component of the miRNA-induced-silencing complex (miRISC), and probably upstream of ced-3, regulates temporal cell fate patterning during larval development. May play a role in resistance to S.typhimurium-mediated infection. Plays a major role in programmed cell death. egl-1 binds to and directly inhibits the activity of ced-9, releasing the cell death activator ced-4 from a ced-9/ced-4-containing protein complex and allowing ced-4 to induce caspase ced-3 autoproteolytic cleavage and activation. Also forms a holoenzyme with processed ced-3 enhancing ced-3 activity. In terms of biological role, prevents programmed cell death. The sequence is that of Cell death protein 4 (ced-4) from Caenorhabditis elegans.